The chain runs to 385 residues: Protein pelota homolog (385 aa).

A Glycyl lysine isopeptide (Lys-Gly) (interchain with G-Cter in SUMO2) cross-link involves residue Lys-162. 4 positions are modified to phosphoserine: Ser-374, Ser-380, Ser-381, and Ser-382.

The protein belongs to the eukaryotic release factor 1 family. Pelota subfamily. In terms of assembly, component of the Pelota-HBS1L complex, also named Dom34-Hbs1 complex, composed of PELO and HBS1L. Interacts with PINK1. Interacts with ABCE1. Interacts with CNOT4. The cofactor is a divalent metal cation. As to expression, ubiquitously expressed.

Its subcellular location is the cytoplasm. In terms of biological role, component of the Pelota-HBS1L complex, a complex that recognizes stalled ribosomes and triggers the No-Go Decay (NGD) pathway. In the Pelota-HBS1L complex, PELO recognizes ribosomes stalled at the 3' end of an mRNA and engages stalled ribosomes by destabilizing mRNA in the mRNA channel. Following mRNA extraction from stalled ribosomes by the SKI complex, the Pelota-HBS1L complex promotes recruitment of ABCE1, which drives the disassembly of stalled ribosomes, followed by degradation of damaged mRNAs as part of the NGD pathway. As part of the PINK1-regulated signaling, upon mitochondrial damage is recruited to the ribosome/mRNA-ribonucleoprotein complex associated to mitochondrial outer membrane thereby enabling the recruitment of autophagy receptors and induction of mitophagy. The sequence is that of Protein pelota homolog from Mus musculus (Mouse).